Consider the following 271-residue polypeptide: NADPH-dependent 7-cyano-7-deazaguanine reductase (271 aa).

Position 81–83 (Ile81–Ser83) interacts with substrate. An NADPH-binding site is contributed by Ser83–Lys84. The active-site Thioimide intermediate is Cys177. Residue Asp184 is the Proton donor of the active site. His216–Glu217 contributes to the substrate binding site. Residue Arg245–Gly246 participates in NADPH binding.

This sequence belongs to the GTP cyclohydrolase I family. QueF type 2 subfamily. In terms of assembly, homodimer.

The protein localises to the cytoplasm. The enzyme catalyses 7-aminomethyl-7-carbaguanine + 2 NADP(+) = 7-cyano-7-deazaguanine + 2 NADPH + 3 H(+). It participates in tRNA modification; tRNA-queuosine biosynthesis. Catalyzes the NADPH-dependent reduction of 7-cyano-7-deazaguanine (preQ0) to 7-aminomethyl-7-deazaguanine (preQ1). The protein is NADPH-dependent 7-cyano-7-deazaguanine reductase of Xanthomonas campestris pv. campestris (strain 8004).